Consider the following 451-residue polypeptide: Phosphoglucosamine mutase (451 aa).

Residue S102 is the Phosphoserine intermediate of the active site. Residues S102, D244, D246, and D248 each coordinate Mg(2+). S102 is subject to Phosphoserine.

It belongs to the phosphohexose mutase family. Requires Mg(2+) as cofactor. In terms of processing, activated by phosphorylation.

The catalysed reaction is alpha-D-glucosamine 1-phosphate = D-glucosamine 6-phosphate. In terms of biological role, catalyzes the conversion of glucosamine-6-phosphate to glucosamine-1-phosphate. This chain is Phosphoglucosamine mutase, found in Lawsonia intracellularis (strain PHE/MN1-00).